Consider the following 148-residue polypeptide: Protein NrdI (148 aa).

Belongs to the NrdI family.

Functionally, probably involved in ribonucleotide reductase function. This is Protein NrdI from Mycolicibacterium gilvum (strain PYR-GCK) (Mycobacterium gilvum (strain PYR-GCK)).